Here is a 144-residue protein sequence, read N- to C-terminus: Large ribosomal subunit protein uL13 (144 aa).

This sequence belongs to the universal ribosomal protein uL13 family. In terms of assembly, part of the 50S ribosomal subunit.

In terms of biological role, this protein is one of the early assembly proteins of the 50S ribosomal subunit, although it is not seen to bind rRNA by itself. It is important during the early stages of 50S assembly. The polypeptide is Large ribosomal subunit protein uL13 (Clostridium perfringens (strain ATCC 13124 / DSM 756 / JCM 1290 / NCIMB 6125 / NCTC 8237 / Type A)).